The chain runs to 123 residues: Venom protein 29 (123 aa).

A signal peptide spans 1-18 (MNKLFLFTLLVTLWSVKG).

Post-translationally, contains 3 disulfide bonds. In terms of tissue distribution, expressed by the venom gland.

Its subcellular location is the secreted. This is Venom protein 29 from Lychas mucronatus (Chinese swimming scorpion).